A 238-amino-acid chain; its full sequence is Ribonuclease PH (238 aa).

Residues arginine 86 and 124-126 (GTR) each bind phosphate.

Belongs to the RNase PH family. Homohexameric ring arranged as a trimer of dimers.

It catalyses the reaction tRNA(n+1) + phosphate = tRNA(n) + a ribonucleoside 5'-diphosphate. Its function is as follows. Phosphorolytic 3'-5' exoribonuclease that plays an important role in tRNA 3'-end maturation. Removes nucleotide residues following the 3'-CCA terminus of tRNAs; can also add nucleotides to the ends of RNA molecules by using nucleoside diphosphates as substrates, but this may not be physiologically important. Probably plays a role in initiation of 16S rRNA degradation (leading to ribosome degradation) during starvation. This chain is Ribonuclease PH, found in Brucella melitensis biotype 2 (strain ATCC 23457).